We begin with the raw amino-acid sequence, 364 residues long: L-carnitine dehydrogenase (364 aa).

11–16 (GGGVIG) contributes to the NAD(+) binding site. The tract at residues 336-364 (KPAASTAAEKAKASKPVKKAEKPKKKKKG) is disordered. Basic residues predominate over residues 348–364 (ASKPVKKAEKPKKKKKG).

The protein belongs to the 3-hydroxyacyl-CoA dehydrogenase family. L-carnitine dehydrogenase subfamily. In terms of assembly, homodimer.

The protein localises to the cytoplasm. The catalysed reaction is carnitine + NAD(+) = 3-dehydrocarnitine + NADH + H(+). It participates in amine and polyamine metabolism; carnitine metabolism. Its function is as follows. Catalyzes the NAD(+)-dependent oxidation of L-carnitine to 3-dehydrocarnitine. This is L-carnitine dehydrogenase from Mesorhizobium japonicum (strain LMG 29417 / CECT 9101 / MAFF 303099) (Mesorhizobium loti (strain MAFF 303099)).